The primary structure comprises 267 residues: Phosphatidylserine decarboxylase proenzyme (267 aa).

Catalysis depends on charge relay system; for autoendoproteolytic cleavage activity residues D78, H132, and S236. S236 serves as the catalytic Schiff-base intermediate with substrate; via pyruvic acid; for decarboxylase activity. S236 is modified (pyruvic acid (Ser); by autocatalysis).

This sequence belongs to the phosphatidylserine decarboxylase family. PSD-B subfamily. Prokaryotic type I sub-subfamily. In terms of assembly, heterodimer of a large membrane-associated beta subunit and a small pyruvoyl-containing alpha subunit. It depends on pyruvate as a cofactor. Is synthesized initially as an inactive proenzyme. Formation of the active enzyme involves a self-maturation process in which the active site pyruvoyl group is generated from an internal serine residue via an autocatalytic post-translational modification. Two non-identical subunits are generated from the proenzyme in this reaction, and the pyruvate is formed at the N-terminus of the alpha chain, which is derived from the carboxyl end of the proenzyme. The autoendoproteolytic cleavage occurs by a canonical serine protease mechanism, in which the side chain hydroxyl group of the serine supplies its oxygen atom to form the C-terminus of the beta chain, while the remainder of the serine residue undergoes an oxidative deamination to produce ammonia and the pyruvoyl prosthetic group on the alpha chain. During this reaction, the Ser that is part of the protease active site of the proenzyme becomes the pyruvoyl prosthetic group, which constitutes an essential element of the active site of the mature decarboxylase.

Its subcellular location is the cell membrane. The catalysed reaction is a 1,2-diacyl-sn-glycero-3-phospho-L-serine + H(+) = a 1,2-diacyl-sn-glycero-3-phosphoethanolamine + CO2. It functions in the pathway phospholipid metabolism; phosphatidylethanolamine biosynthesis; phosphatidylethanolamine from CDP-diacylglycerol: step 2/2. In terms of biological role, catalyzes the formation of phosphatidylethanolamine (PtdEtn) from phosphatidylserine (PtdSer). This is Phosphatidylserine decarboxylase proenzyme from Helicobacter pylori (strain ATCC 700392 / 26695) (Campylobacter pylori).